A 77-amino-acid chain; its full sequence is uncharacterized protein (77 aa).

The HTH cro/C1-type domain maps to 13-67 (VLQYMVNNDYSLNQLALEIGVSPATLSRVLNGERRPGQLVIGKMLHYFNLKFEDL). A DNA-binding region (H-T-H motif) is located at residues 24 to 43 (LNQLALEIGVSPATLSRVLN).

Its subcellular location is the cytoplasm. This is an uncharacterized protein from Bacillus subtilis (strain 168).